A 365-amino-acid polypeptide reads, in one-letter code: Metallophosphoesterase 1 homolog (365 aa).

Residues 10-30 traverse the membrane as a helical segment; the sequence is PILLAIILVVYNEYFIFFIAF. A divalent metal cation is bound by residues Asp54, Asp96, Asn132, His208, His262, and His264. The chain crosses the membrane as a helical span at residues 319–339; that stretch reads ILQIMVYIFGGIGIVILAFIL.

The protein belongs to the metallophosphoesterase superfamily. MPPE1 family. Mn(2+) serves as cofactor.

The protein localises to the endoplasmic reticulum-Golgi intermediate compartment membrane. It localises to the golgi apparatus. Its subcellular location is the cis-Golgi network membrane. Functionally, metallophosphoesterase required for transport of GPI-anchor proteins from the endoplasmic reticulum to the Golgi. Acts in lipid remodeling steps of GPI-anchor maturation by mediating the removal of a side-chain ethanolamine-phosphate (EtNP) from the second Man (Man2) of the GPI intermediate, an essential step for efficient transport of GPI-anchor proteins. This chain is Metallophosphoesterase 1 homolog, found in Caenorhabditis elegans.